Here is a 242-residue protein sequence, read N- to C-terminus: Phosphoribosylaminoimidazole-succinocarboxamide synthase (242 aa).

This sequence belongs to the SAICAR synthetase family.

It catalyses the reaction 5-amino-1-(5-phospho-D-ribosyl)imidazole-4-carboxylate + L-aspartate + ATP = (2S)-2-[5-amino-1-(5-phospho-beta-D-ribosyl)imidazole-4-carboxamido]succinate + ADP + phosphate + 2 H(+). It participates in purine metabolism; IMP biosynthesis via de novo pathway; 5-amino-1-(5-phospho-D-ribosyl)imidazole-4-carboxamide from 5-amino-1-(5-phospho-D-ribosyl)imidazole-4-carboxylate: step 1/2. The chain is Phosphoribosylaminoimidazole-succinocarboxamide synthase from Magnetococcus marinus (strain ATCC BAA-1437 / JCM 17883 / MC-1).